The following is a 462-amino-acid chain: Adenosylhomocysteinase (462 aa).

Substrate-binding residues include Thr55, Asp128, and Glu188. An NAD(+)-binding site is contributed by 189–191; the sequence is TTT. 2 residues coordinate substrate: Lys218 and Asp222. NAD(+) is bound by residues Asn223, 252–257, Glu275, Asn310, 331–333, and Asn376; these read GYGDVG and IGH.

It belongs to the adenosylhomocysteinase family. The cofactor is NAD(+).

The protein localises to the cytoplasm. It carries out the reaction S-adenosyl-L-homocysteine + H2O = L-homocysteine + adenosine. It functions in the pathway amino-acid biosynthesis; L-homocysteine biosynthesis; L-homocysteine from S-adenosyl-L-homocysteine: step 1/1. May play a key role in the regulation of the intracellular concentration of adenosylhomocysteine. This chain is Adenosylhomocysteinase, found in Roseobacter denitrificans (strain ATCC 33942 / OCh 114) (Erythrobacter sp. (strain OCh 114)).